Consider the following 545-residue polypeptide: Glucans biosynthesis protein G (545 aa).

Positions 1–34 (MVSLLRCQSFKPSSSLICSLALSAAFALSSSAFA) are cleaved as a signal peptide. A disordered region spans residues 38 to 60 (KPAENKPATPVVSPPKATAQPAN).

Belongs to the OpgD/OpgG family.

It localises to the periplasm. It functions in the pathway glycan metabolism; osmoregulated periplasmic glucan (OPG) biosynthesis. Involved in the biosynthesis of osmoregulated periplasmic glucans (OPGs). In Shewanella sp. (strain ANA-3), this protein is Glucans biosynthesis protein G.